Reading from the N-terminus, the 461-residue chain is NADH-ubiquinone oxidoreductase chain 4 (461 aa).

13 helical membrane passes run 20–42 (PAWL…LTWL), 61–81 (PLST…ILAS), 93–113 (QRSF…AFGA), 114–134 (TEII…LIII), 147–167 (GTYF…ALLM), 197–217 (WTAC…HLWL), 225–245 (PIAG…YGMM), 258–278 (LAYP…SICL), 285–304 (SLIA…GILT), 309–331 (GFTG…FCLA), 351–371 (VILP…LALP), 393–413 (TLTM…HMFL), and 436–456 (LLMT…ELIW).

This sequence belongs to the complex I subunit 4 family.

It is found in the mitochondrion membrane. The enzyme catalyses a ubiquinone + NADH + 5 H(+)(in) = a ubiquinol + NAD(+) + 4 H(+)(out). Its function is as follows. Core subunit of the mitochondrial membrane respiratory chain NADH dehydrogenase (Complex I) that is believed to belong to the minimal assembly required for catalysis. Complex I functions in the transfer of electrons from NADH to the respiratory chain. The immediate electron acceptor for the enzyme is believed to be ubiquinone. The chain is NADH-ubiquinone oxidoreductase chain 4 (MT-ND4) from Latimeria chalumnae (Coelacanth).